Consider the following 448-residue polypeptide: Adenylosuccinate synthetase (448 aa).

GTP contacts are provided by residues 36-42 (GDEGKGK) and 64-66 (GHT). The Proton acceptor role is filled by D37. Residues D37 and G64 each coordinate Mg(2+). IMP is bound by residues 37–40 (DEGK), 62–65 (NAGH), T154, R168, N246, T261, and R325. Residue H65 is the Proton donor of the active site. 321–327 (VTTKRKR) provides a ligand contact to substrate. GTP-binding positions include R327, 353–355 (KLD), and 436–438 (GVG).

The protein belongs to the adenylosuccinate synthetase family. Homodimer. Requires Mg(2+) as cofactor.

The protein resides in the cytoplasm. The enzyme catalyses IMP + L-aspartate + GTP = N(6)-(1,2-dicarboxyethyl)-AMP + GDP + phosphate + 2 H(+). It participates in purine metabolism; AMP biosynthesis via de novo pathway; AMP from IMP: step 1/2. Functionally, plays an important role in the de novo pathway and in the salvage pathway of purine nucleotide biosynthesis. Catalyzes the first committed step in the biosynthesis of AMP from IMP. In Drosophila pseudoobscura pseudoobscura (Fruit fly), this protein is Adenylosuccinate synthetase.